The following is a 143-amino-acid chain: Large ribosomal subunit protein uL13 (143 aa).

The protein belongs to the universal ribosomal protein uL13 family. In terms of assembly, part of the 50S ribosomal subunit.

Functionally, this protein is one of the early assembly proteins of the 50S ribosomal subunit, although it is not seen to bind rRNA by itself. It is important during the early stages of 50S assembly. The protein is Large ribosomal subunit protein uL13 of Prochlorococcus marinus (strain MIT 9312).